Here is a 250-residue protein sequence, read N- to C-terminus: Entry-fusion complex associated protein OPG095 (250 aa).

A lipid anchor (N-myristoyl glycine; by host) is attached at Gly-2. The interval 2-12 (GAAASIQTTVN) is targeting to MV membrane. The Virion surface portion of the chain corresponds to 2–183 (GAAASIQTTV…IAPRQVAGTG (182 aa)). 3 disulfides stabilise this stretch: Cys-34–Cys-57, Cys-49–Cys-136, and Cys-116–Cys-158. Residues 184-204 (VQFYMIVIGVIILAALFMYYA) form a helical membrane-spanning segment. The Intravirion segment spans residues 205-250 (KRMLFTSTNDKIKLILANKENVHWTTYMDTFFRTSPMVIATTDIQN).

It belongs to the orthopoxvirus OPG095 family. Component of the entry fusion complex (EFC) composed of OPG053, OPG076, OPG086, OPG094, OPG095, OPG099, OPG107, OPG143, OPG104, OPG147 and OPG155. Except for OPG095 and OPG053, each of the EFC proteins is required for assembly or stability of the complex. Post-translationally, myristoylated. Disulfid bonds are oxidized in the cytoplasm by OPG088 protein. In terms of processing, unglycosylated because produced in viral factories instead of the classic ER -Golgi route.

The protein resides in the virion membrane. Component of the entry fusion complex (EFC), which consists of 11 proteins. During cell infection, this complex mediates entry of the virion core into the host cytoplasm by a two-step mechanism consisting of lipid mixing of the viral and cellular membranes and subsequent pore formation. The chain is Entry-fusion complex associated protein OPG095 (OPG099) from Variola virus (isolate Human/India/Ind3/1967) (VARV).